The primary structure comprises 787 residues: Endonuclease MutS2 (787 aa).

334–341 (GPNTGGKT) serves as a coordination point for ATP. The Smr domain occupies 712-787 (LDLRGKRYEE…GNGATIVTFK (76 aa)).

This sequence belongs to the DNA mismatch repair MutS family. MutS2 subfamily. As to quaternary structure, homodimer. Binds to stalled ribosomes, contacting rRNA.

Functionally, endonuclease that is involved in the suppression of homologous recombination and thus may have a key role in the control of bacterial genetic diversity. Its function is as follows. Acts as a ribosome collision sensor, splitting the ribosome into its 2 subunits. Detects stalled/collided 70S ribosomes which it binds and splits by an ATP-hydrolysis driven conformational change. Acts upstream of the ribosome quality control system (RQC), a ribosome-associated complex that mediates the extraction of incompletely synthesized nascent chains from stalled ribosomes and their subsequent degradation. Probably generates substrates for RQC. This Latilactobacillus sakei subsp. sakei (strain 23K) (Lactobacillus sakei subsp. sakei) protein is Endonuclease MutS2.